Reading from the N-terminus, the 518-residue chain is Bifunctional purine biosynthesis protein PurH (518 aa).

Residues 1-146 (MARIALISVS…KNHESVSILT (146 aa)) form the MGS-like domain.

It belongs to the PurH family.

It carries out the reaction (6R)-10-formyltetrahydrofolate + 5-amino-1-(5-phospho-beta-D-ribosyl)imidazole-4-carboxamide = 5-formamido-1-(5-phospho-D-ribosyl)imidazole-4-carboxamide + (6S)-5,6,7,8-tetrahydrofolate. It catalyses the reaction IMP + H2O = 5-formamido-1-(5-phospho-D-ribosyl)imidazole-4-carboxamide. Its pathway is purine metabolism; IMP biosynthesis via de novo pathway; 5-formamido-1-(5-phospho-D-ribosyl)imidazole-4-carboxamide from 5-amino-1-(5-phospho-D-ribosyl)imidazole-4-carboxamide (10-formyl THF route): step 1/1. It functions in the pathway purine metabolism; IMP biosynthesis via de novo pathway; IMP from 5-formamido-1-(5-phospho-D-ribosyl)imidazole-4-carboxamide: step 1/1. This chain is Bifunctional purine biosynthesis protein PurH, found in Prochlorococcus marinus (strain MIT 9211).